The chain runs to 341 residues: Tetraacyldisaccharide 4'-kinase (341 aa).

54–61 (TVGGAGKT) lines the ATP pocket.

This sequence belongs to the LpxK family.

The enzyme catalyses a lipid A disaccharide + ATP = a lipid IVA + ADP + H(+). It functions in the pathway glycolipid biosynthesis; lipid IV(A) biosynthesis; lipid IV(A) from (3R)-3-hydroxytetradecanoyl-[acyl-carrier-protein] and UDP-N-acetyl-alpha-D-glucosamine: step 6/6. In terms of biological role, transfers the gamma-phosphate of ATP to the 4'-position of a tetraacyldisaccharide 1-phosphate intermediate (termed DS-1-P) to form tetraacyldisaccharide 1,4'-bis-phosphate (lipid IVA). This Brucella ovis (strain ATCC 25840 / 63/290 / NCTC 10512) protein is Tetraacyldisaccharide 4'-kinase.